The chain runs to 297 residues: Tyrosine recombinase XerD (297 aa).

The Core-binding (CB) domain maps to 1–86 (MNDLIEDFLH…SLRSFFHYLM (86 aa)). Positions 107-291 (GLPKVLNLDD…TKLRLKDVYK (185 aa)) constitute a Tyr recombinase domain. Residues Arg147, Lys171, His243, Arg246, and His269 contribute to the active site. Tyr278 (O-(3'-phospho-DNA)-tyrosine intermediate) is an active-site residue.

The protein belongs to the 'phage' integrase family. XerD subfamily. As to quaternary structure, forms a cyclic heterotetrameric complex composed of two molecules of XerC and two molecules of XerD.

It is found in the cytoplasm. Site-specific tyrosine recombinase, which acts by catalyzing the cutting and rejoining of the recombining DNA molecules. The XerC-XerD complex is essential to convert dimers of the bacterial chromosome into monomers to permit their segregation at cell division. It also contributes to the segregational stability of plasmids. This chain is Tyrosine recombinase XerD, found in Listeria monocytogenes serotype 4b (strain F2365).